The primary structure comprises 63 residues: Small ribosomal subunit protein eS31 (63 aa).

Cysteine 31, cysteine 34, cysteine 50, and cysteine 53 together coordinate Zn(2+).

The protein belongs to the eukaryotic ribosomal protein eS31 family. Part of the 30S ribosomal subunit. It depends on Zn(2+) as a cofactor.

This chain is Small ribosomal subunit protein eS31 (rps27ae), found in Aeropyrum pernix (strain ATCC 700893 / DSM 11879 / JCM 9820 / NBRC 100138 / K1).